Reading from the N-terminus, the 1359-residue chain is Regulatory-associated protein of TOR 2 (1359 aa).

Disordered regions lie at residues 17 to 64 and 782 to 819; these read SSAA…PQVA and SDNSATARDGRISTSSPIATNSIMHGSPQSDDSSQHSD. A compositionally biased stretch (basic and acidic residues) spans 32–50; sequence HLVDDHLPVENGPDPRRDV. Polar residues predominate over residues 782-805; it reads SDNSATARDGRISTSSPIATNSIM. The segment covering 806-819 has biased composition (low complexity); that stretch reads HGSPQSDDSSQHSD. WD repeat units lie at residues 1041-1080, 1087-1127, 1139-1178, 1181-1221, 1228-1269, 1273-1312, and 1321-1359; these read RFELGTKASLLLPFSPIVVAADENEQIRVWNYDDALPVNT, SDRG…GGQK, RSAGRSIVFDWQQQSGYLYASGDMSSILVWDLDKEQVNTI, TADS…RLVY, PRSE…EPYL, AHRGSLTALAVHRHAPVIASGSAKQMIKVFSLEGEQLTII, and QRIGSVNCLSFHRYKSLLAAGAGDNALVSIYAEDNYQVR.

Belongs to the WD repeat RAPTOR family. As to quaternary structure, the target of rapamycin complex 1 (TORC1) is composed of at least RAPTOR, LST8 and TOR.

Component of TORC1 complex, which is an essential cell growth regulator that controls plant development. Acts by recruiting substrates for TOR. Acts by activating transcription, protein synthesis and ribosome biogenesis, and inhibiting mRNA degradation and autophagy. This chain is Regulatory-associated protein of TOR 2 (RAPTOR2), found in Oryza sativa subsp. japonica (Rice).